The chain runs to 1071 residues: MKLIYTEMSYSMTEILVNEARKAADQGYRVFYIAPNSLSFEKEREVLTLLPERGTFSIIVTRFVQMSRYFTVESSPSKQHLDDTTLAMIFYRALMQLKPEDLPSYGRLQNNSVFIEQLVELYKELKNAQLSVHDLTGLDHPQKQEDLIKIIELAETIMIQQDYNQDSPLQSFARAIKLGLLNNQLSKTVIVIDGFSRFSAEEDYLLSLLNNNCQEVIIGSYVSQKAYQKSFIKGNIYEASLHFLQDLAQKYHIKPVFATSNQVFKPAFSRLTQLFEATHDFSQVDWQLQKNDLDHFSLWQCHHQKEEIEHVAKSIRQKLYEGYRYKDILVLLGDMDAYQLQIGPIFDKFEIPYYLGKAEPMAAHPLVQFIESLERSQRYNWRREDILNMLKSGLFGCFDDSDIDRFEEYTQFADIKGFTKFSKPFTINSSRQYPLDFLNEMRQDIVLPLQELFKSQKQLGASLVDKLILFFKKIRLAENMQGLAQSQLEVEKNEEVWKRFTDILTSFHHIFGQEKLRLSDCLALIKTGMKSAQYRVVPATLDVVTIKSYDLVQPHSKPFVYAIGLTQSHFPKQIHHSGLLSDQERARINEIRNYRHFDIASAENSKKNHQTALSLFNAATKELVLSVPTVINETFDDLSPYLKELISFGLPLLDKGKNYLSYDNSDIGNYKALLSQIIAINRQDLIEMSDQDKMFWTVVLRYLRKQLRKQQLELPTSDYRLSTKPLSKEVIEVCFPKGIPLKLSATALTVFYNNQYNYFLKYVLNLNKTESIHPDSRIHGQYLHRVFERLMKDHTQEPFDNKLKQAIYHTNQESFFQQVYQDNAEAEYSLAILEDIVRSTAPILQLNQNIKVIDQEKNFHLDMGNEILVHGIIDRIDQLSDGSLGIVDYKSSANQFDIGTFYNGLSPQLVTYLAALKQIAPHDINQLFGAMYLHLQDPKLDLVTFKQIDNTLVESIYKALTYKGIFSEVEKEHLSTGAYQTKNALYSNDELETLLNYNKYLYLKAAKHIKKGHFLINPYTSDGKTVQGDQLKAITRFEADLDMAQARRLVTLPAKEKKECFLTLMRKESHL.

This sequence belongs to the helicase family. AddB/RexB type 2 subfamily. In terms of assembly, heterodimer of AddA and RexB. It depends on Mg(2+) as a cofactor.

The heterodimer acts as both an ATP-dependent DNA helicase and an ATP-dependent, dual-direction single-stranded exonuclease. Recognizes the chi site generating a DNA molecule suitable for the initiation of homologous recombination. This subunit has 5' -&gt; 3' nuclease activity but not helicase activity. The chain is ATP-dependent helicase/deoxyribonuclease subunit B from Streptococcus pyogenes serotype M28 (strain MGAS6180).